We begin with the raw amino-acid sequence, 652 residues long: uncharacterized protein (652 aa).

Basic and acidic residues-rich tracts occupy residues 1 to 13 (MSVTESKAKTERK) and 641 to 652 (ATERTDNLADAA). Disordered stretches follow at residues 1–21 (MSVTESKAKTERKSSRKPAKT) and 628–652 (VPGWMCAPRPQTDATERTDNLADAA).

Belongs to the ParB family.

This is an uncharacterized protein from Escherichia coli O157:H7.